Here is a 193-residue protein sequence, read N- to C-terminus: Acyl carrier protein phosphodiesterase (193 aa).

The protein belongs to the AcpH family.

It catalyses the reaction holo-[ACP] + H2O = apo-[ACP] + (R)-4'-phosphopantetheine + H(+). Functionally, converts holo-ACP to apo-ACP by hydrolytic cleavage of the phosphopantetheine prosthetic group from ACP. This Salmonella choleraesuis (strain SC-B67) protein is Acyl carrier protein phosphodiesterase.